Consider the following 221-residue polypeptide: MCPLRSLLLLSTLVLLHHLPHLSLGRSLPPTTAGPGRSCLNYSQNLLRAVSDTLQKARQTLEFYSCTSEEIDHEDITKDKTSTVEACLPLELATNESCLVSRETSLITHGSCLASGKTSFMTTLCLKSIYEDLKMYHMEFQAMNAKLLMDPKRQIFLDQNMLAAIAELMQALNFNSETVPQKPSLEEMDFYKTKVKLCILLHAFRIRAVTIDRMMSYLSSS.

The N-terminal stretch at 1 to 25 (MCPLRSLLLLSTLVLLHHLPHLSLG) is a signal peptide. 3 disulfides stabilise this stretch: Cys39–Cys112, Cys66–Cys198, and Cys87–Cys125. Asn41 and Asn95 each carry an N-linked (GlcNAc...) asparagine glycan.

This sequence belongs to the IL-6 superfamily. Heterodimer with IL12B; disulfide-linked. This heterodimer is known as interleukin IL-12. Heterodimer with EBI3/IL27B; not disulfide-linked. This heterodimer is known as interleukin IL-35. Interacts with NBR1; this interaction promotes IL-12 secretion.

The protein resides in the secreted. Functionally, heterodimerizes with IL12B to form the IL-12 cytokine or with EBI3/IL27B to form the IL-35 cytokine. IL-12 is primarily produced by professional antigen-presenting cells (APCs) such as B-cells and dendritic cells (DCs) as well as macrophages and granulocytes and regulates T-cell and natural killer-cell responses, induces the production of interferon-gamma (IFN-gamma), favors the differentiation of T-helper 1 (Th1) cells and is an important link between innate resistance and adaptive immunity. Mechanistically, exerts its biological effects through a receptor composed of IL12R1 and IL12R2 subunits. Binding to the receptor results in the rapid tyrosine phosphorylation of a number of cellular substrates including the JAK family kinases TYK2 and JAK2. In turn, recruited STAT4 gets phosphorylated and translocates to the nucleus where it regulates cytokine/growth factor responsive genes. As part of IL-35, plays essential roles in maintaining the immune homeostasis of the liver microenvironment and also functions as an immune-suppressive cytokine. Mediates biological events through unconventional receptors composed of IL12RB2 and gp130/IL6ST heterodimers or homodimers. Signaling requires the transcription factors STAT1 and STAT4, which form a unique heterodimer that binds to distinct DNA sites. This Cervus elaphus (Red deer) protein is Interleukin-12 subunit alpha (IL12A).